The primary structure comprises 311 residues: Olfactory receptor 10G7 (311 aa).

The Extracellular segment spans residues 1–23 (MSNATLLTAFILTGLPHAPGLDA). The N-linked (GlcNAc...) asparagine glycan is linked to N3. A helical transmembrane segment spans residues 24-44 (PLFGIFLVVYVLTVLGNLLIL). The Cytoplasmic portion of the chain corresponds to 45 to 52 (LVIRVDSH). A helical transmembrane segment spans residues 53 to 73 (LHTPMYYFLTNLSFIDMWFST). The Extracellular portion of the chain corresponds to 74–98 (VTVPKMLMTLVSPSGRTISFHSCVA). C96 and C188 are joined by a disulfide. A helical transmembrane segment spans residues 99–119 (QLYFFHFLGSTECFLYTVMSY). The Cytoplasmic segment spans residues 120 to 138 (DRYLAISYPLRYTNMMTGR). The helical transmembrane segment at 139–159 (SCALLATGTWLSGSLHSAVQT) threads the bilayer. Topologically, residues 160-196 (ILTFHLPYCGPNQIQHYFCDAPPILKLACADTSANEM) are extracellular. A helical membrane pass occupies residues 197-216 (VIFVNIGLVASGCFVLIVLS). At 217 to 236 (YVSIVCSILRIRTSEGRHRA) the chain is on the cytoplasmic side. A helical membrane pass occupies residues 237-257 (FQTCASHCIVVLCFFGPGLFI). Residues 258–268 (YLRPGSRDALH) are Extracellular-facing. The chain crosses the membrane as a helical span at residues 269 to 289 (GVVAVFYTTLTPLFNPVVYTL). Residues 290–311 (RNKEVKKALLKLKNGSVFAQGE) are Cytoplasmic-facing.

This sequence belongs to the G-protein coupled receptor 1 family.

The protein localises to the cell membrane. In terms of biological role, odorant receptor. This chain is Olfactory receptor 10G7 (OR10G7), found in Homo sapiens (Human).